The primary structure comprises 197 residues: Beta-crystallin A2 (197 aa).

The tract at residues 1-11 (MSSASAPGPAP) is N-terminal arm. 2 consecutive Beta/gamma crystallin 'Greek key' domains span residues 12-52 (ACLT…KVEN) and 53-99 (GAWV…RPVL). The interval 100–105 (CANHSD) is connecting peptide. 2 consecutive Beta/gamma crystallin 'Greek key' domains span residues 106 to 147 (SRVT…KVSS) and 148 to 196 (GAWV…RRVQ).

This sequence belongs to the beta/gamma-crystallin family. As to quaternary structure, homo/heterodimer, or complexes of higher-order. The structure of beta-crystallin oligomers seems to be stabilized through interactions between the N-terminal arms.

Its function is as follows. Crystallins are the dominant structural components of the vertebrate eye lens. The polypeptide is Beta-crystallin A2 (CRYBA2) (Oryctolagus cuniculus (Rabbit)).